Consider the following 761-residue polypeptide: Xaa-Pro dipeptidyl-peptidase (761 aa).

Active-site charge relay system residues include S347, D467, and H497.

It belongs to the peptidase S15 family. In terms of assembly, homodimer.

Its subcellular location is the cytoplasm. The enzyme catalyses Hydrolyzes Xaa-Pro-|- bonds to release unblocked, N-terminal dipeptides from substrates including Ala-Pro-|-p-nitroanilide and (sequentially) Tyr-Pro-|-Phe-Pro-|-Gly-Pro-|-Ile.. Functionally, removes N-terminal dipeptides sequentially from polypeptides having unsubstituted N-termini provided that the penultimate residue is proline. The protein is Xaa-Pro dipeptidyl-peptidase of Streptococcus agalactiae serotype III (strain NEM316).